Here is a 369-residue protein sequence, read N- to C-terminus: DNA replication and repair protein RecF (369 aa).

30 to 37 is a binding site for ATP; sequence GPNGSGKT.

This sequence belongs to the RecF family.

Its subcellular location is the cytoplasm. The RecF protein is involved in DNA metabolism; it is required for DNA replication and normal SOS inducibility. RecF binds preferentially to single-stranded, linear DNA. It also seems to bind ATP. This is DNA replication and repair protein RecF from Chlorobium luteolum (strain DSM 273 / BCRC 81028 / 2530) (Pelodictyon luteolum).